A 287-amino-acid chain; its full sequence is MMKNILAIQSHVVYGHAGNSAAEFPMRRLGANVWPLNTVQFSNHTQYGKWTGCVMPPSHLTEIVQGIAAIDKLHTCDAVLSGYLGSAEQGEHILGIVRQVKAANPQAKYFCDPVMGHPEKGCIVAPGVAEFHVRHGLPASDIIAPNLVELEILCEHPVKNVEEAVLAARELIAQGPQIVLVKHLARAGYSRDRFEMLLVTADEAWHISRPLVDFGMRQPVGVGDVTSGLLLVKLLQGATLQEALEHVTAAVYEIMVTTKAMQEYELQVVAAQDRIANPEHYFSATKL.

Substrate-binding positions include Ser-10 and 45–46 (TQ). Residues Asp-112, Ala-144, Glu-149, Lys-182, and 209–212 (RPLV) contribute to the ATP site. Residue Asp-224 coordinates substrate.

The protein belongs to the pyridoxine kinase family. PdxY subfamily. As to quaternary structure, homodimer. It depends on Mg(2+) as a cofactor.

The catalysed reaction is pyridoxal + ATP = pyridoxal 5'-phosphate + ADP + H(+). The protein operates within cofactor metabolism; pyridoxal 5'-phosphate salvage; pyridoxal 5'-phosphate from pyridoxal: step 1/1. Functionally, pyridoxal kinase involved in the salvage pathway of pyridoxal 5'-phosphate (PLP). Catalyzes the phosphorylation of pyridoxal to PLP. In Escherichia coli O6:H1 (strain CFT073 / ATCC 700928 / UPEC), this protein is Pyridoxal kinase PdxY.